The primary structure comprises 338 residues: NAC domain-containing protein 46 (338 aa).

Residues 20–171 (LPPGFRFHPT…EWVVCRVFHK (152 aa)) enclose the NAC domain. A DNA-binding region spans residues 118–177 (VGMKKTLVFYTGRAPKGEKTNWVMHEYRLDGKYSYHNLPKTARDEWVVCRVFHKNAPSTT).

As to quaternary structure, interacts with RCD1.

The protein resides in the nucleus. In terms of biological role, transcriptional activator that acts as a positive regulator of leaf senescence. Activates NYC1, SGR1, SGR2 and PAO, which are genes involved in chlorophyll catabolic processes. Activates senescence-associated genes, such as RNS1, SAG12 and SAG13. The protein is NAC domain-containing protein 46 of Arabidopsis thaliana (Mouse-ear cress).